The chain runs to 87 residues: UPF0367 protein Pro_0144 (87 aa).

Belongs to the UPF0367 family.

In Prochlorococcus marinus (strain SARG / CCMP1375 / SS120), this protein is UPF0367 protein Pro_0144.